The primary structure comprises 572 residues: MIFYLVLLVLGAIAFYVHFSNNRKKLIERLEIVAQRRRDDLSKNVEQARKAADKLDTQRRDWIGSLDFEQLRDELQRGHVTCVEAIRAYFHKAILAHEKTNAVTCFILDAERQAEELDEQAKLPYYVKPPLFGVPLSLKECLKVKGYDTTRGFVQDAYHPATEDSIQVEHYKKLGLIPFCQTNVPQSLLSYNCSNPLFGTTTNPYDSTRTCGGSSGGEGALIGAGGSLIGIGTDVGGSVRIPCHFTGTAGIKPSKMRFAHRGGGASVPGKPLIDANDGPMAKDVKTNVEFLRNVWGDIDFQSDRDPYCPPVHWNESVYSSEKKLRVGYYIDDGWFTPTPALQRAVLESKKHLEAAGHTVIPFYPPRLPSVMQLYFRAVCLDGGQYVLNKLLKDIIEPTIRFQVTLWMVPVWIQRILSYPVSLVFPRMGMLMQSLTRDTFELREAYADIEAYREEFVGLMMKDNLDVILCPASIMPAPQHDIPSKVVSGVSYTCLYNLLDFGAGVVPVTAVSKSDEEKLINEYPETDKWYQITKKATLGAVGMPIGVQVAAPPYREEAVLRTMREIEIAVTGK.

Positions 1–14 are cleaved as a signal peptide; the sequence is MIFYLVLLVLGAIA. Residues 32 to 63 adopt a coiled-coil conformation; that stretch reads IVAQRRRDDLSKNVEQARKAADKLDTQRRDWI. Active-site charge relay system residues include lysine 139 and serine 214. Substrate is bound by residues serine 214 and 235–238; that span reads VGGS. Residue serine 238 is the Acyl-ester intermediate of the active site.

Belongs to the amidase family. As to expression, expressed in the pharynx, some pharyngeal neurons, the posterior intestine and anal depressor muscles.

It carries out the reaction N-(5Z,8Z,11Z,14Z-eicosatetraenoyl)-ethanolamine + H2O = ethanolamine + (5Z,8Z,11Z,14Z)-eicosatetraenoate. It catalyses the reaction (9Z)-octadecenamide + H2O = (9Z)-octadecenoate + NH4(+). The enzyme catalyses (5Z,8Z,11Z,14Z,17Z-eicosapentaenoyl) ethanolamine + H2O = (5Z,8Z,11Z,14Z,17Z)-eicosapentaenoate + ethanolamine. The catalysed reaction is N-(9Z-hexadecenoyl) ethanolamine + H2O = (9Z)-hexadecenoate + ethanolamine. It carries out the reaction N-(9Z-octadecenoyl) ethanolamine + H2O = ethanolamine + (9Z)-octadecenoate. It catalyses the reaction N-octadecanoyl ethanolamine + H2O = octadecanoate + ethanolamine. The enzyme catalyses N-docosanoyl-ethanolamine + H2O = docosanoate + ethanolamine. The catalysed reaction is N-(15Z-tetracosenoyl)-ethanolamine + H2O = (15Z)-tetracosenoate + ethanolamine. It carries out the reaction N-hexadecanoylethanolamine + H2O = ethanolamine + hexadecanoate. It catalyses the reaction N-(9Z,12Z-octadecadienoyl)-ethanolamine + H2O = ethanolamine + (9Z,12Z)-octadecadienoate. The enzyme catalyses (9Z)-octadecenoate + glycine = N-(9Z-octadecenoyl)glycine + H2O. The catalysed reaction is N-(5Z,8Z,11Z,14Z)-eicosatetraenoyl-glycine + H2O = (5Z,8Z,11Z,14Z)-eicosatetraenoate + glycine. It carries out the reaction N-(5Z,8Z,11Z,14Z-eicosatetraenoyl)-L-serine + H2O = (5Z,8Z,11Z,14Z)-eicosatetraenoate + L-serine. In terms of biological role, catalyzes the hydrolysis of endogenous amidated lipids like anandamide (AEA or N-(5Z,8Z,11Z,14Z-eicosatetraenoyl)-ethanolamine) and eicosapentaneoyl ethanolamide (EPEA or (5Z,8Z,11Z,14Z,17Z-eicosapentaenoyl) ethanolamine), as well as other fatty amides, to their corresponding fatty acids, thereby regulating the signaling functions of these molecules. EPEA promotes dauer formation and may constitute a signal of high nutrient availability. Breakdown of EPEA may promote lifespan extension when nutrient availability is high. Facilitates axon regeneration after injury by degradating inhibitory compounds such as AEA. FAAH cooperates with PM20D1 in the hydrolysis of amino acid-conjugated fatty acids such as N-fatty acyl glycine and N-fatty acyl-L-serine, thereby acting as a physiological regulator of specific subsets of intracellular, but not of extracellular, N-fatty acyl amino acids. The polypeptide is Fatty acid amide hydrolase 1 (Caenorhabditis elegans).